The sequence spans 305 residues: Guanine nucleotide-binding protein subunit beta (305 aa).

WD repeat units lie at residues asparagine 19–aspartate 49, alanine 61–aspartate 91, glycine 104–aspartate 133, glycine 145–aspartate 176, glycine 188–aspartate 218, proline 231–aspartate 260, and glycine 272–serine 302.

This sequence belongs to the WD repeat G protein beta family. In terms of assembly, g proteins are composed of 3 units, alpha, beta and gamma. Binding of the beta-gamma subunit complex (git5-git11) to the alpha subunit (gpa2) facilitates interaction with GPCR git3.

The protein localises to the cell membrane. It is found in the cytoplasm. Its subcellular location is the nucleus. Functionally, beta subunit of the heterotrimeric guanine nucleotide-binding protein (G protein) involved in glucose-induced cAMP signaling. The beta-gamma subunits (git5-git11) promote binding of the alpha subunit gpa2 to GPCR git3, which senses extracellular glucose, to activate cAMP-PKA signaling and repress sexual development and gluconeogenesis. In Schizosaccharomyces pombe (strain 972 / ATCC 24843) (Fission yeast), this protein is Guanine nucleotide-binding protein subunit beta (git5).